The following is a 464-amino-acid chain: tRNA-2-methylthio-N(6)-dimethylallyladenosine synthase (464 aa).

The MTTase N-terminal domain maps to 19–135; it reads GSYWITTFGC…LENLLGKVDL (117 aa). Residues cysteine 28, cysteine 64, cysteine 98, cysteine 170, cysteine 174, and cysteine 177 each coordinate [4Fe-4S] cluster. Residues 156–394 enclose the Radical SAM core domain; sequence RESSICGWVN…DLVEKTARSR (239 aa). Residues 396–464 enclose the TRAM domain; sequence KRYINNIESV…PFSLTGELYL (69 aa).

It belongs to the methylthiotransferase family. MiaB subfamily. As to quaternary structure, monomer. [4Fe-4S] cluster is required as a cofactor.

The protein localises to the cytoplasm. The enzyme catalyses N(6)-dimethylallyladenosine(37) in tRNA + (sulfur carrier)-SH + AH2 + 2 S-adenosyl-L-methionine = 2-methylsulfanyl-N(6)-dimethylallyladenosine(37) in tRNA + (sulfur carrier)-H + 5'-deoxyadenosine + L-methionine + A + S-adenosyl-L-homocysteine + 2 H(+). Catalyzes the methylthiolation of N6-(dimethylallyl)adenosine (i(6)A), leading to the formation of 2-methylthio-N6-(dimethylallyl)adenosine (ms(2)i(6)A) at position 37 in tRNAs that read codons beginning with uridine. This is tRNA-2-methylthio-N(6)-dimethylallyladenosine synthase from Prochlorococcus marinus (strain AS9601).